Reading from the N-terminus, the 274-residue chain is MKVLFRSDSSSQIGFGHIKRDLVLAKQYSDVSFACLPLEGSLIDEIPYPVYELSSESIYELINLIKEEKFELLIIDHYGISVDDEKLIKLETGVKILSFDDEIKPHHCDILLNVNAYAKASDYEGLVPFKCEVRCGFSYALIREEFYQEAKENREKKYDFFICMGGTDIKNLSLQIASELPKTKIISIATSSSNPNLKKLQKFAKLHNNIRLFIDHENIAKLMNESNKLIISASSLVNEALLLKANFKAICYVKNQESTATWLAKKGYEVEYKY.

15 to 16 (FG) is a binding site for substrate. His17 acts as the Proton acceptor in catalysis. Residues Arg143, 234-235 (SS), and Glu239 each bind substrate.

The protein belongs to the PseG family. In terms of assembly, monomer.

The enzyme catalyses UDP-2,4-diacetamido-2,4,6-trideoxy-beta-L-altrose + H2O = 2,4-diacetamido-2,4,6-trideoxy-beta-L-altrose + UDP + H(+). Its function is as follows. Nucleotide sugar hydrolase that catalyzes the fourth step in the biosynthesis of pseudaminic acid, a sialic-acid-like sugar that is used to modify flagellin. Mediates the removal of UDP from C-1 of UDP-2,4-diacetamido-2,4,6-trideoxy-beta-L-altropyranose forming 2,4-diacetamido-2,4,6-trideoxy-beta-L-altropyranose. This is UDP-2,4-diacetamido-2,4,6-trideoxy-beta-L-altropyranose hydrolase (pseG) from Campylobacter jejuni subsp. jejuni serotype O:2 (strain ATCC 700819 / NCTC 11168).